A 426-amino-acid chain; its full sequence is Serine--tRNA ligase (426 aa).

230-232 (TSE) serves as a coordination point for L-serine. Position 261 to 263 (261 to 263 (RKE)) interacts with ATP. Glu284 serves as a coordination point for L-serine. An ATP-binding site is contributed by 348-351 (EISS). An L-serine-binding site is contributed by Ser385.

The protein belongs to the class-II aminoacyl-tRNA synthetase family. Type-1 seryl-tRNA synthetase subfamily. As to quaternary structure, homodimer. The tRNA molecule binds across the dimer.

It is found in the cytoplasm. The catalysed reaction is tRNA(Ser) + L-serine + ATP = L-seryl-tRNA(Ser) + AMP + diphosphate + H(+). It carries out the reaction tRNA(Sec) + L-serine + ATP = L-seryl-tRNA(Sec) + AMP + diphosphate + H(+). The protein operates within aminoacyl-tRNA biosynthesis; selenocysteinyl-tRNA(Sec) biosynthesis; L-seryl-tRNA(Sec) from L-serine and tRNA(Sec): step 1/1. In terms of biological role, catalyzes the attachment of serine to tRNA(Ser). Is also able to aminoacylate tRNA(Sec) with serine, to form the misacylated tRNA L-seryl-tRNA(Sec), which will be further converted into selenocysteinyl-tRNA(Sec). The chain is Serine--tRNA ligase from Wolbachia pipientis subsp. Culex pipiens (strain wPip).